Reading from the N-terminus, the 134-residue chain is Profilin-2 (134 aa).

A disulfide bridge links Cys-13 with Cys-118. An Involved in PIP2 interaction motif is present at residues 84 to 100; that stretch reads AVIRGKKGSGGITIKKT. Position 114 is a phosphothreonine (Thr-114).

Belongs to the profilin family. In terms of assembly, occurs in many kinds of cells as a complex with monomeric actin in a 1:1 ratio. Post-translationally, phosphorylated by MAP kinases.

The protein resides in the cytoplasm. It is found in the cytoskeleton. Binds to actin and affects the structure of the cytoskeleton. At high concentrations, profilin prevents the polymerization of actin, whereas it enhances it at low concentrations. The polypeptide is Profilin-2 (Olea europaea (Common olive)).